Reading from the N-terminus, the 258-residue chain is Deoxyribose-phosphate aldolase (258 aa).

Aspartate 102 (proton donor/acceptor) is an active-site residue. The active-site Schiff-base intermediate with acetaldehyde is lysine 165. The Proton donor/acceptor role is filled by lysine 199.

The protein belongs to the DeoC/FbaB aldolase family. DeoC type 2 subfamily.

The protein resides in the cytoplasm. It catalyses the reaction 2-deoxy-D-ribose 5-phosphate = D-glyceraldehyde 3-phosphate + acetaldehyde. The protein operates within carbohydrate degradation; 2-deoxy-D-ribose 1-phosphate degradation; D-glyceraldehyde 3-phosphate and acetaldehyde from 2-deoxy-alpha-D-ribose 1-phosphate: step 2/2. In terms of biological role, catalyzes a reversible aldol reaction between acetaldehyde and D-glyceraldehyde 3-phosphate to generate 2-deoxy-D-ribose 5-phosphate. The polypeptide is Deoxyribose-phosphate aldolase (Vibrio vulnificus (strain CMCP6)).